Consider the following 315-residue polypeptide: Protein-methionine-sulfoxide reductase catalytic subunit MsrP (315 aa).

The tat-type signal signal peptide spans 1–45 (MPSYRPPKIASSEITPRQVYLRRREFLGAATLGAMALYGAGKASA). Mo-molybdopterin contacts are provided by residues Asn71, 74–75 (YE), Cys129, Thr164, Asn214, Arg219, and 230–232 (GIK).

The protein belongs to the MsrP family. In terms of assembly, heterodimer of a catalytic subunit (MsrP) and a heme-binding subunit (MsrQ). Requires Mo-molybdopterin as cofactor. Predicted to be exported by the Tat system. The position of the signal peptide cleavage has not been experimentally proven.

It localises to the periplasm. The catalysed reaction is L-methionyl-[protein] + a quinone + H2O = L-methionyl-(S)-S-oxide-[protein] + a quinol. It catalyses the reaction L-methionyl-[protein] + a quinone + H2O = L-methionyl-(R)-S-oxide-[protein] + a quinol. Its function is as follows. Part of the MsrPQ system that repairs oxidized periplasmic proteins containing methionine sulfoxide residues (Met-O), using respiratory chain electrons. Thus protects these proteins from oxidative-stress damage caused by reactive species of oxygen and chlorine generated by the host defense mechanisms. MsrPQ is essential for the maintenance of envelope integrity under bleach stress, rescuing a wide series of structurally unrelated periplasmic proteins from methionine oxidation. The catalytic subunit MsrP is non-stereospecific, being able to reduce both (R-) and (S-) diastereoisomers of methionine sulfoxide. The sequence is that of Protein-methionine-sulfoxide reductase catalytic subunit MsrP from Rhizobium etli (strain ATCC 51251 / DSM 11541 / JCM 21823 / NBRC 15573 / CFN 42).